Consider the following 358-residue polypeptide: Isopentenyl-diphosphate delta-isomerase (358 aa).

12 to 13 (RK) is a binding site for substrate. FMN is bound by residues 69–71 (AMT), S99, and N128. Residue Q158 coordinates substrate. E159 is a binding site for Mg(2+). FMN-binding positions include K190, T220, 267–269 (GIR), and 288–289 (AG).

It belongs to the IPP isomerase type 2 family. Homooctamer. Dimer of tetramers. FMN serves as cofactor. Requires NADPH as cofactor. It depends on Mg(2+) as a cofactor.

The protein localises to the cytoplasm. The enzyme catalyses isopentenyl diphosphate = dimethylallyl diphosphate. Its function is as follows. Involved in the biosynthesis of isoprenoids. Catalyzes the 1,3-allylic rearrangement of the homoallylic substrate isopentenyl (IPP) to its allylic isomer, dimethylallyl diphosphate (DMAPP). The polypeptide is Isopentenyl-diphosphate delta-isomerase (Listeria innocua serovar 6a (strain ATCC BAA-680 / CLIP 11262)).